The primary structure comprises 114 residues: UPF0102 protein HP_0823 (114 aa).

It belongs to the UPF0102 family.

This is UPF0102 protein HP_0823 from Helicobacter pylori (strain ATCC 700392 / 26695) (Campylobacter pylori).